We begin with the raw amino-acid sequence, 101 residues long: Large ribosomal subunit protein bL21 (101 aa).

Belongs to the bacterial ribosomal protein bL21 family. Part of the 50S ribosomal subunit. Contacts protein L20.

Its function is as follows. This protein binds to 23S rRNA in the presence of protein L20. The sequence is that of Large ribosomal subunit protein bL21 from Corynebacterium aurimucosum (strain ATCC 700975 / DSM 44827 / CIP 107346 / CN-1) (Corynebacterium nigricans).